The chain runs to 415 residues: Serine hydroxymethyltransferase (415 aa).

Residues leucine 121 and 125-127 contribute to the (6S)-5,6,7,8-tetrahydrofolate site; that span reads GHL. Lysine 229 is modified (N6-(pyridoxal phosphate)lysine).

It belongs to the SHMT family. Homodimer. Requires pyridoxal 5'-phosphate as cofactor.

Its subcellular location is the cytoplasm. The catalysed reaction is (6R)-5,10-methylene-5,6,7,8-tetrahydrofolate + glycine + H2O = (6S)-5,6,7,8-tetrahydrofolate + L-serine. Its pathway is one-carbon metabolism; tetrahydrofolate interconversion. It functions in the pathway amino-acid biosynthesis; glycine biosynthesis; glycine from L-serine: step 1/1. Its function is as follows. Catalyzes the reversible interconversion of serine and glycine with tetrahydrofolate (THF) serving as the one-carbon carrier. This reaction serves as the major source of one-carbon groups required for the biosynthesis of purines, thymidylate, methionine, and other important biomolecules. Also exhibits THF-independent aldolase activity toward beta-hydroxyamino acids, producing glycine and aldehydes, via a retro-aldol mechanism. In Bordetella petrii (strain ATCC BAA-461 / DSM 12804 / CCUG 43448), this protein is Serine hydroxymethyltransferase.